Reading from the N-terminus, the 354-residue chain is Methylthioribose-1-phosphate isomerase (354 aa).

Residues 58 to 60 (RGA), arginine 101, and glutamine 204 each bind substrate. Aspartate 245 acts as the Proton donor in catalysis. 255–256 (NK) contributes to the substrate binding site.

It belongs to the eIF-2B alpha/beta/delta subunits family. MtnA subfamily.

The catalysed reaction is 5-(methylsulfanyl)-alpha-D-ribose 1-phosphate = 5-(methylsulfanyl)-D-ribulose 1-phosphate. It participates in amino-acid biosynthesis; L-methionine biosynthesis via salvage pathway; L-methionine from S-methyl-5-thio-alpha-D-ribose 1-phosphate: step 1/6. Functionally, catalyzes the interconversion of methylthioribose-1-phosphate (MTR-1-P) into methylthioribulose-1-phosphate (MTRu-1-P). This chain is Methylthioribose-1-phosphate isomerase, found in Xanthomonas axonopodis pv. citri (strain 306).